The primary structure comprises 214 residues: Holliday junction branch migration complex subunit RuvA (214 aa).

Positions 1–63 (MISFLRGTVA…EDSLTLFGFS (63 aa)) are domain I. The interval 64-142 (SDDEREVFDV…PHGTGAAAAP (79 aa)) is domain II. The interval 143–153 (AAAASAPWKPQ) is flexible linker. The interval 153-214 (QVVAAMTSLG…RAGNRVGSRG (62 aa)) is domain III.

Belongs to the RuvA family. Homotetramer. Forms an RuvA(8)-RuvB(12)-Holliday junction (HJ) complex. HJ DNA is sandwiched between 2 RuvA tetramers; dsDNA enters through RuvA and exits via RuvB. An RuvB hexamer assembles on each DNA strand where it exits the tetramer. Each RuvB hexamer is contacted by two RuvA subunits (via domain III) on 2 adjacent RuvB subunits; this complex drives branch migration. In the full resolvosome a probable DNA-RuvA(4)-RuvB(12)-RuvC(2) complex forms which resolves the HJ.

It is found in the cytoplasm. The RuvA-RuvB-RuvC complex processes Holliday junction (HJ) DNA during genetic recombination and DNA repair, while the RuvA-RuvB complex plays an important role in the rescue of blocked DNA replication forks via replication fork reversal (RFR). RuvA specifically binds to HJ cruciform DNA, conferring on it an open structure. The RuvB hexamer acts as an ATP-dependent pump, pulling dsDNA into and through the RuvAB complex. HJ branch migration allows RuvC to scan DNA until it finds its consensus sequence, where it cleaves and resolves the cruciform DNA. The polypeptide is Holliday junction branch migration complex subunit RuvA (Arthrobacter sp. (strain FB24)).